Consider the following 392-residue polypeptide: Heat-inducible transcription repressor HrcA (392 aa).

The protein belongs to the HrcA family.

Functionally, negative regulator of class I heat shock genes (grpE-dnaK-dnaJ and groELS operons). Prevents heat-shock induction of these operons. This chain is Heat-inducible transcription repressor HrcA, found in Chlamydia trachomatis serovar D (strain ATCC VR-885 / DSM 19411 / UW-3/Cx).